We begin with the raw amino-acid sequence, 340 residues long: UDP-3-O-(3-hydroxymyristoyl)glucosamine N-acyltransferase (340 aa).

The Proton acceptor role is filled by His239.

Belongs to the transferase hexapeptide repeat family. LpxD subfamily. As to quaternary structure, homotrimer.

The catalysed reaction is a UDP-3-O-[(3R)-3-hydroxyacyl]-alpha-D-glucosamine + a (3R)-hydroxyacyl-[ACP] = a UDP-2-N,3-O-bis[(3R)-3-hydroxyacyl]-alpha-D-glucosamine + holo-[ACP] + H(+). The enzyme catalyses UDP-3-O-[(3R)-3-hydroxytetradecanoyl]-alpha-D-glucosamine + (3R)-hydroxytetradecanoyl-[ACP] = UDP-2-N,3-O-bis[(3R)-3-hydroxytetradecanoyl]-alpha-D-glucosamine + holo-[ACP] + H(+). It participates in glycolipid biosynthesis; lipid IV(A) biosynthesis; lipid IV(A) from (3R)-3-hydroxytetradecanoyl-[acyl-carrier-protein] and UDP-N-acetyl-alpha-D-glucosamine: step 3/6. In terms of biological role, catalyzes the N-acylation of UDP-3-O-(hydroxytetradecanoyl)glucosamine using 3-hydroxytetradecanoyl-ACP as the acyl donor. Is involved in the biosynthesis of lipid A, a phosphorylated glycolipid that anchors the lipopolysaccharide to the outer membrane of the cell. This is UDP-3-O-(3-hydroxymyristoyl)glucosamine N-acyltransferase from Yersinia pestis bv. Antiqua (strain Antiqua).